The primary structure comprises 141 residues: MAMTVHCDIVSAEGEIFSGLVEMVIAHGALGDLGIALGHAPLITNLKPGPIRLIKQGGEAEVFYISGGFLEVQPNMVKVLADTVQRAADLDEAQAQAALKAAEAALHEKSADFDYGAASARLAEAAAQLRTVQQIRKKFGG.

This sequence belongs to the ATPase epsilon chain family. F-type ATPases have 2 components, CF(1) - the catalytic core - and CF(0) - the membrane proton channel. CF(1) has five subunits: alpha(3), beta(3), gamma(1), delta(1), epsilon(1). CF(0) has three main subunits: a, b and c.

The protein localises to the cell inner membrane. Its function is as follows. Produces ATP from ADP in the presence of a proton gradient across the membrane. The chain is ATP synthase epsilon chain from Pseudomonas fluorescens (strain Pf0-1).